Here is a 489-residue protein sequence, read N- to C-terminus: Aklavinone 12-hydroxylase DnrF (489 aa).

FAD is bound by residues 17-18 (LG), glutamate 37, glutamine 121, and leucine 145. Catalysis depends on tyrosine 224, which acts as the Proton acceptor. An FAD-binding site is contributed by aspartate 308. Glycine 317 provides a ligand contact to aklavinone. Disordered stretches follow at residues 402–428 (VAAE…RAPH) and 455–489 (EGGA…PPAN). The span at 468 to 482 (RIWASASTSISSAAM) shows a compositional bias: low complexity.

Belongs to the PheA/TfdB FAD monooxygenase family. As to quaternary structure, monomer. FAD is required as a cofactor.

It carries out the reaction aklavinone + NADPH + O2 + H(+) = epsilon-rhodomycinone + NADP(+) + H2O. Its pathway is antibiotic biosynthesis; daunorubicin biosynthesis. It participates in antibiotic biosynthesis; carminomycin biosynthesis. It functions in the pathway antibiotic biosynthesis; rhodomycin biosynthesis. Involved in the biosynthesis of the anthracyclines carminomycin, rhodomycin and daunorubicin (daunomycin) which are aromatic polyketide antibiotics that exhibit high cytotoxicity and are widely applied in the chemotherapy of a variety of cancers. Catalyzes the incorporation of a hydroxyl group at position C-11 of aklavinone, resulting in epsilon-rhodomycinone. It cannot accept substrates glycosylated at position C-7. It can also hydroxylate 11-deoxycarminomycinone and can use both NAD or NADP. The protein is Aklavinone 12-hydroxylase DnrF (dnrF) of Streptomyces peucetius.